A 566-amino-acid chain; its full sequence is Cytoplasmic polyadenylation element-binding protein 2 (566 aa).

Disordered stretches follow at residues 17 to 46 and 64 to 98; these read FWGNGDQLEGKTLSSIKQQESKKMDDSVEG and LERLHEKEEQECEEERLDWSEKVDSEEEEEDIQEQ. Positions 87–98 are enriched in acidic residues; that stretch reads DSEEEEEDIQEQ. The 83-residue stretch at 430 to 512 folds into the RRM domain; that stretch reads MVAFIGGVPR…KRVEIKPYFF (83 aa).

In terms of biological role, cytoplasmic polyadenylation element binding protein that binds to and regulates the translation of specific mRNAs. The polypeptide is Cytoplasmic polyadenylation element-binding protein 2 (cpb-2) (Caenorhabditis briggsae).